Reading from the N-terminus, the 309-residue chain is 4-hydroxy-3-methylbut-2-enyl diphosphate reductase (309 aa).

Residue cysteine 13 participates in [4Fe-4S] cluster binding. Positions 42 and 75 each coordinate (2E)-4-hydroxy-3-methylbut-2-enyl diphosphate. Dimethylallyl diphosphate contacts are provided by histidine 42 and histidine 75. Isopentenyl diphosphate contacts are provided by histidine 42 and histidine 75. Cysteine 97 is a binding site for [4Fe-4S] cluster. (2E)-4-hydroxy-3-methylbut-2-enyl diphosphate is bound at residue histidine 125. Position 125 (histidine 125) interacts with dimethylallyl diphosphate. Isopentenyl diphosphate is bound at residue histidine 125. Glutamate 127 functions as the Proton donor in the catalytic mechanism. Threonine 165 is a binding site for (2E)-4-hydroxy-3-methylbut-2-enyl diphosphate. A [4Fe-4S] cluster-binding site is contributed by cysteine 195. (2E)-4-hydroxy-3-methylbut-2-enyl diphosphate contacts are provided by serine 223, serine 224, asparagine 225, and serine 267. Serine 223, serine 224, asparagine 225, and serine 267 together coordinate dimethylallyl diphosphate. 4 residues coordinate isopentenyl diphosphate: serine 223, serine 224, asparagine 225, and serine 267.

The protein belongs to the IspH family. [4Fe-4S] cluster serves as cofactor.

The catalysed reaction is isopentenyl diphosphate + 2 oxidized [2Fe-2S]-[ferredoxin] + H2O = (2E)-4-hydroxy-3-methylbut-2-enyl diphosphate + 2 reduced [2Fe-2S]-[ferredoxin] + 2 H(+). The enzyme catalyses dimethylallyl diphosphate + 2 oxidized [2Fe-2S]-[ferredoxin] + H2O = (2E)-4-hydroxy-3-methylbut-2-enyl diphosphate + 2 reduced [2Fe-2S]-[ferredoxin] + 2 H(+). Its pathway is isoprenoid biosynthesis; dimethylallyl diphosphate biosynthesis; dimethylallyl diphosphate from (2E)-4-hydroxy-3-methylbutenyl diphosphate: step 1/1. It participates in isoprenoid biosynthesis; isopentenyl diphosphate biosynthesis via DXP pathway; isopentenyl diphosphate from 1-deoxy-D-xylulose 5-phosphate: step 6/6. Functionally, catalyzes the conversion of 1-hydroxy-2-methyl-2-(E)-butenyl 4-diphosphate (HMBPP) into a mixture of isopentenyl diphosphate (IPP) and dimethylallyl diphosphate (DMAPP). Acts in the terminal step of the DOXP/MEP pathway for isoprenoid precursor biosynthesis. The sequence is that of 4-hydroxy-3-methylbut-2-enyl diphosphate reductase from Chlamydia abortus (strain DSM 27085 / S26/3) (Chlamydophila abortus).